Here is a 371-residue protein sequence, read N- to C-terminus: tRNA-specific 2-thiouridylase MnmA (371 aa).

ATP is bound by residues 7–14 (AMSGGVDS) and L33. C101 (nucleophile) is an active-site residue. Cysteines 101 and 213 form a disulfide. Residue G125 coordinates ATP. Positions 163-165 (KDQ) are interaction with tRNA. C213 acts as the Cysteine persulfide intermediate in catalysis.

Belongs to the MnmA/TRMU family.

It is found in the cytoplasm. It carries out the reaction S-sulfanyl-L-cysteinyl-[protein] + uridine(34) in tRNA + AH2 + ATP = 2-thiouridine(34) in tRNA + L-cysteinyl-[protein] + A + AMP + diphosphate + H(+). Catalyzes the 2-thiolation of uridine at the wobble position (U34) of tRNA, leading to the formation of s(2)U34. The protein is tRNA-specific 2-thiouridylase MnmA of Roseiflexus castenholzii (strain DSM 13941 / HLO8).